Consider the following 380-residue polypeptide: Crotonobetainyl-CoA reductase (380 aa).

The protein belongs to the acyl-CoA dehydrogenase family. Homotetramer. The cofactor is FAD.

The protein resides in the cytoplasm. The enzyme catalyses 4-(trimethylamino)butanoyl-CoA + oxidized [electron-transfer flavoprotein] + H(+) = crotonobetainyl-CoA + reduced [electron-transfer flavoprotein]. It participates in amine and polyamine metabolism; carnitine metabolism. In terms of biological role, catalyzes the reduction of crotonobetainyl-CoA to gamma-butyrobetainyl-CoA. This Salmonella typhi protein is Crotonobetainyl-CoA reductase.